The chain runs to 374 residues: Queuine tRNA-ribosyltransferase (374 aa).

The Proton acceptor role is filled by D94. Residues 94–98, D148, Q191, and G218 each bind substrate; that span reads DSGGF. Residues 249-255 are RNA binding; that stretch reads GVGSPDY. D268 (nucleophile) is an active-site residue. The tract at residues 273–277 is RNA binding; important for wobble base 34 recognition; that stretch reads TRIGR. Zn(2+)-binding residues include C306, C308, C311, and H337.

It belongs to the queuine tRNA-ribosyltransferase family. In terms of assembly, homodimer. Within each dimer, one monomer is responsible for RNA recognition and catalysis, while the other monomer binds to the replacement base PreQ1. Zn(2+) serves as cofactor.

The enzyme catalyses 7-aminomethyl-7-carbaguanine + guanosine(34) in tRNA = 7-aminomethyl-7-carbaguanosine(34) in tRNA + guanine. Its pathway is tRNA modification; tRNA-queuosine biosynthesis. Functionally, catalyzes the base-exchange of a guanine (G) residue with the queuine precursor 7-aminomethyl-7-deazaguanine (PreQ1) at position 34 (anticodon wobble position) in tRNAs with GU(N) anticodons (tRNA-Asp, -Asn, -His and -Tyr). Catalysis occurs through a double-displacement mechanism. The nucleophile active site attacks the C1' of nucleotide 34 to detach the guanine base from the RNA, forming a covalent enzyme-RNA intermediate. The proton acceptor active site deprotonates the incoming PreQ1, allowing a nucleophilic attack on the C1' of the ribose to form the product. After dissociation, two additional enzymatic reactions on the tRNA convert PreQ1 to queuine (Q), resulting in the hypermodified nucleoside queuosine (7-(((4,5-cis-dihydroxy-2-cyclopenten-1-yl)amino)methyl)-7-deazaguanosine). In Acetivibrio thermocellus (strain ATCC 27405 / DSM 1237 / JCM 9322 / NBRC 103400 / NCIMB 10682 / NRRL B-4536 / VPI 7372) (Clostridium thermocellum), this protein is Queuine tRNA-ribosyltransferase.